We begin with the raw amino-acid sequence, 837 residues long: V-type proton ATPase 116 kDa subunit a 1 (837 aa).

Topologically, residues 1-388 are cytoplasmic; the sequence is MGELFRSEEM…DAYGIGSYRE (388 aa). A helical transmembrane segment spans residues 389–407; it reads INPAPYTIITFPFLFAVMF. Residues 408 to 409 are Vacuolar-facing; sequence GD. Residues 410–426 traverse the membrane as a helical segment; that stretch reads FGHGILMTLFAVWMVVR. Residues 427-441 are Cytoplasmic-facing; sequence ESRILSQKIDNELFT. Residues 442-471 form a helical membrane-spanning segment; that stretch reads MMFSGRYIILLMGLFSIYTGLIYNDCFSKA. Residues 472–534 lie on the Vacuolar side of the membrane; it reads LNLFGSSWSV…ATNKLTFLNS (63 aa). A helical transmembrane segment spans residues 535 to 554; it reads FKMKMSVVLGIIHMTFGVAL. Topologically, residues 555-572 are cytoplasmic; sequence SLLNHIYFKKPLNIYLGF. Residues 573–593 form a helical membrane-spanning segment; that stretch reads IPEMIFMTTLFGYLVILIIYK. Residues 594–638 lie on the Vacuolar side of the membrane; the sequence is WCAYDASTSMVAPSLLIHFINMFLFSYQDTSLPMLYKGQMGLQCF. A helical membrane pass occupies residues 639–658; the sequence is LVVCAIICVPWMLVVKPLIL. Topologically, residues 659-724 are cytoplasmic; the sequence is RRQYLRRKHL…DTVVHQAIHT (66 aa). A helical transmembrane segment spans residues 725-749; that stretch reads IEYCLGCISNTASYLRLWALSLAHA. Over 750-770 the chain is Vacuolar; that stretch reads QLSEVLWTMVMHVGLSIRSLG. Residues 771–809 form a helical membrane-spanning segment; it reads GGIALVFVFSAFATLTIAILLIMEGLSAFLHALRLHWVE. The Cytoplasmic segment spans residues 810–837; sequence FQNKFYMGTGFKFLPFSFENIREGKFDE.

Belongs to the V-ATPase 116 kDa subunit family. As to quaternary structure, V-ATPase is a heteromultimeric enzyme made up of two complexes: the ATP-hydrolytic V1 complex and the proton translocation V0 complex. The V1 complex consists of three catalytic AB heterodimers that form a heterohexamer, three peripheral stalks each consisting of EG heterodimers, one central rotor including subunits D and F, and the regulatory subunits C and H. The proton translocation complex V0 consists of the proton transport subunit a, a ring of proteolipid subunits c9c'', rotary subunit d, subunits e and f, and two accessory subunits.

Its subcellular location is the cytoplasmic vesicle. It localises to the clathrin-coated vesicle membrane. The protein resides in the secretory vesicle. The protein localises to the synaptic vesicle membrane. It is found in the melanosome. Subunit of the V0 complex of vacuolar(H+)-ATPase (V-ATPase), a multisubunit enzyme composed of a peripheral complex (V1) that hydrolyzes ATP and a membrane integral complex (V0) that translocates protons. V-ATPase is responsible for acidifying and maintaining the pH of intracellular compartments and in some cell types, is targeted to the plasma membrane, where it is responsible for acidifying the extracellular environment. Required for assembly and activity of the vacuolar ATPase. The polypeptide is V-type proton ATPase 116 kDa subunit a 1 (atp6v0a1) (Xenopus tropicalis (Western clawed frog)).